A 102-amino-acid chain; its full sequence is ATP-dependent Clp protease adapter protein ClpS (102 aa).

Belongs to the ClpS family. Binds to the N-terminal domain of the chaperone ClpA.

Functionally, involved in the modulation of the specificity of the ClpAP-mediated ATP-dependent protein degradation. This is ATP-dependent Clp protease adapter protein ClpS from Dechloromonas aromatica (strain RCB).